Consider the following 195-residue polypeptide: U8 snoRNA-decapping enzyme (195 aa).

The Nudix hydrolase domain maps to 18 to 173 (DWRHACHALL…IGAAREQLLE (156 aa)). Residues His-24, Arg-50, and Phe-57 each contribute to the substrate site. 4 residues coordinate Mn(2+): Gly-59, Glu-76, Glu-80, and His-99. The Nudix box signature appears at 61-82 (FVDAQDSCLEDGLNRELREELG). Gln-170 contacts substrate. Glu-173 lines the Mn(2+) pocket.

The protein belongs to the Nudix hydrolase family. NUDT16 subfamily. As to quaternary structure, homodimer. Mg(2+) serves as cofactor. It depends on Mn(2+) as a cofactor. The cofactor is Co(2+). Expressed in brain, testis, spleen, lung, heart, liver, kidney and muscle (at protein level).

The protein resides in the nucleus. The protein localises to the nucleolus. It is found in the nucleoplasm. Its subcellular location is the cytoplasm. The enzyme catalyses a 5'-end (N(7)-methyl 5'-triphosphoguanosine)-ribonucleoside in mRNA + H2O = N(7)-methyl-GDP + a 5'-end phospho-ribonucleoside in mRNA + 2 H(+). The catalysed reaction is IDP + H2O = IMP + phosphate + H(+). It catalyses the reaction dIDP + H2O = dIMP + phosphate + H(+). It carries out the reaction a 5'-end NAD(+)-phospho-ribonucleoside in mRNA + H2O = a 5'-end phospho-ribonucleoside in mRNA + NAD(+) + H(+). The enzyme catalyses a 5'-end FAD-phospho-ribonucleoside in mRNA + H2O = a 5'-end phospho-adenosine-phospho-ribonucleoside in mRNA + FMN + 2 H(+). The catalysed reaction is a 5'-end CoA-ribonucleoside in mRNA + H2O = a 5'-end phospho-adenosine-phospho-ribonucleoside in mRNA + (R)-4'-phosphopantetheine + 2 H(+). RNA-binding and decapping enzyme that catalyzes the cleavage of the cap structure of snoRNAs and mRNAs in a metal-dependent manner. Part of the U8 snoRNP complex that is required for the accumulation of mature 5.8S and 28S rRNA. Has diphosphatase activity and removes m7G and/or m227G caps from U8 snoRNA and leaves a 5'monophosphate on the RNA. Also catalyzes the cleavage of the cap structure on mRNAs. Does not hydrolyze cap analog structures like 7-methylguanosine nucleoside triphosphate (m7GpppG). Also hydrolysis m7G- and m227G U3-capped RNAs but with less efficiencies. Has broad substrate specificity with manganese or cobalt as cofactor and can act on various RNA species. Binds to the U8 snoRNA; metal is not required for RNA-binding. May play a role in the regulation of snoRNAs and mRNAs degradation. Also acts as a phosphatase; hydrolyzes the non-canonical purine nucleotides inosine diphosphate (IDP) and deoxyinosine diphosphate (dITP) as well as guanosine diphosphate (GDP), deoxyguanosine diphosphate (dGDP), xanthine diphosphate (XDP), inosine triphosphate (ITP) and deoxyinosine triphosphate (ITP) to their respective monophosphate derivatives and does not distinguish between the deoxy- and ribose forms. The order of activity with different substrates is IDP &gt; dIDP &gt;&gt; GDP = dGDP &gt; XDP = ITP = dITP. Binds strongly to GTP, ITP and XTP. Participates in the hydrolysis of dIDP/IDP and probably excludes non-canonical purines from RNA and DNA precursor pools, thus preventing their incorporation into RNA and DNA and avoiding chromosomal lesions. Exhibits decapping activity towards NAD-capped RNAs and FAD-capped RNAs. Exhibits decapping activity towards dpCoA-capped RNAs in vitro. In Mus musculus (Mouse), this protein is U8 snoRNA-decapping enzyme (Nudt16).